A 360-amino-acid polypeptide reads, in one-letter code: 3-isopropylmalate dehydrogenase (360 aa).

Residue 76-89 coordinates NAD(+); the sequence is GPKWDKLDMAIRPE. Substrate-binding residues include arginine 96, arginine 106, arginine 134, and aspartate 224. Aspartate 224, aspartate 248, and aspartate 252 together coordinate Mg(2+). Residue 282-294 coordinates NAD(+); it reads GSAPDIAGQNMAN.

This sequence belongs to the isocitrate and isopropylmalate dehydrogenases family. LeuB type 1 subfamily. Homodimer. Mg(2+) is required as a cofactor. It depends on Mn(2+) as a cofactor.

It is found in the cytoplasm. The enzyme catalyses (2R,3S)-3-isopropylmalate + NAD(+) = 4-methyl-2-oxopentanoate + CO2 + NADH. The protein operates within amino-acid biosynthesis; L-leucine biosynthesis; L-leucine from 3-methyl-2-oxobutanoate: step 3/4. In terms of biological role, catalyzes the oxidation of 3-carboxy-2-hydroxy-4-methylpentanoate (3-isopropylmalate) to 3-carboxy-4-methyl-2-oxopentanoate. The product decarboxylates to 4-methyl-2 oxopentanoate. The sequence is that of 3-isopropylmalate dehydrogenase from Hahella chejuensis (strain KCTC 2396).